Reading from the N-terminus, the 1182-residue chain is Phosphatidylinositol 3-kinase age-1 (1182 aa).

The span at 1-16 (MSMGRSPSTTFRSRTG) shows a compositional bias: polar residues. Residues 1–24 (MSMGRSPSTTFRSRTGSHGARDLI) are disordered. A PI3K-ABD domain is found at 74–174 (NEGVADIITM…FPMLFLYQPD (101 aa)). In terms of domain architecture, PI3K-RBD spans 266–358 (KRKAEINGVC…YRCPGFVVRR (93 aa)). Residues 425–577 (LDANLMIRPV…SSYGGRVRMP (153 aa)) form the C2 PI3K-type domain. The 188-residue stretch at 601–788 (DDYESCIRDP…SLLMEAYLRG (188 aa)) folds into the PIK helical domain. The PI3K/PI4K catalytic domain maps to 853–1168 (IIDKAIVLGS…IYEEAFNGSW (316 aa)). Positions 859–865 (VLGSAKR) are G-loop. Residues 1028–1036 (GIKDRHSDN) are catalytic loop. Residues 1047 to 1073 (HIDFGHILGHGKTKLGIQRDRQPFILT) are activation loop.

Belongs to the PI3/PI4-kinase family.

The catalysed reaction is a 1,2-diacyl-sn-glycero-3-phospho-(1D-myo-inositol) + ATP = a 1,2-diacyl-sn-glycero-3-phospho-(1D-myo-inositol-3-phosphate) + ADP + H(+). Functionally, phosphatidylinositol 3-kinase homolog that regulates longevity and diapause. Promotes cell survival during embryonic development by recruiting akt-1/2 to the plasma membrane through the production of PtdIns(3,4,5)P3. Could function in the development or neuroendocrine signaling of the dauer pathway. Mediates susceptibility to enteropathogenic E.coli infection. May negatively regulate AYI interneuron neurite outgrowth. Plays a role in aversive olfactory learning when an odor is associated with food deprivation. Regulates this process by promoting the nuclear relocalization of egl-4 in AWC olfactory neurons after odor conditioning. The protein is Phosphatidylinositol 3-kinase age-1 of Caenorhabditis elegans.